A 201-amino-acid chain; its full sequence is Probable GTP-binding protein EngB (201 aa).

The 176-residue stretch at 22 to 197 (TFPEYAFIGR…LNYIESINKE (176 aa)) folds into the EngB-type G domain. GTP contacts are provided by residues 30-37 (GRSNVGKS), 57-61 (GKTML), 75-78 (DLPG), 142-145 (TKAD), and 175-178 (ITSS). The Mg(2+) site is built by Ser-37 and Thr-59.

Belongs to the TRAFAC class TrmE-Era-EngA-EngB-Septin-like GTPase superfamily. EngB GTPase family. It depends on Mg(2+) as a cofactor.

In terms of biological role, necessary for normal cell division and for the maintenance of normal septation. In Bacteroides fragilis (strain ATCC 25285 / DSM 2151 / CCUG 4856 / JCM 11019 / LMG 10263 / NCTC 9343 / Onslow / VPI 2553 / EN-2), this protein is Probable GTP-binding protein EngB.